The chain runs to 416 residues: Enterobactin exporter EntS (416 aa).

Over 1–21 (MNKQSWLLNLSLLKTHPAFRA) the chain is Cytoplasmic. A helical transmembrane segment spans residues 22–42 (VFLARFISIVSLGLLGVAVPV). The Periplasmic portion of the chain corresponds to 43–55 (QIQMMTHSTWQVG). The helical transmembrane segment at 56–76 (LSVTLTGGAMFVGLMVGGVLA) threads the bilayer. Residues 77–83 (DRYERKK) are Cytoplasmic-facing. Residues 84 to 104 (VILLARGTCGIGFIGLCLNAL) traverse the membrane as a helical segment. At 105–109 (LPEPS) the chain is on the periplasmic side. Residues 110-130 (LLAIYLLGLWDGFFASLGVTA) traverse the membrane as a helical segment. Topologically, residues 131 to 156 (LLAATPALVGRENLMQAGAITMLTVR) are cytoplasmic. Residues 157-177 (LGSVISPMIGGLLLATGGVAW) form a helical membrane-spanning segment. Position 178 (Asn178) is a topological domain, periplasmic. A helical transmembrane segment spans residues 179-199 (YGLAAAGTFITLLPLLSLPAL). At 200 to 218 (PPPPQPREHPLKSLLAGFR) the chain is on the cytoplasmic side. Residues 219–239 (FLLASPLVGGIALLGGLLTMA) traverse the membrane as a helical segment. The Periplasmic portion of the chain corresponds to 240 to 256 (SAVRVLYPALADNWQMS). A helical membrane pass occupies residues 257–277 (AAQIGFLYAAIPLGAAIGALT). Topologically, residues 278–287 (SGKLAHSVRP) are cytoplasmic. A helical transmembrane segment spans residues 288-307 (GLLMLLSTLGAFLAISLFGL). The Periplasmic portion of the chain corresponds to 308-313 (MPMWIL). The chain crosses the membrane as a helical span at residues 314–336 (GVVCLALFGWLSAVSSLLQYTML). The Cytoplasmic portion of the chain corresponds to 337–356 (QTQTPEAMLGRINGLWTAQN). Residues 357–377 (VTGDAIGAALLGGLGAMMTPV) traverse the membrane as a helical segment. Residue Ala378 is a topological domain, periplasmic. The helical transmembrane segment at 379-399 (SASASGFGLLIIGVLLLLVLV) threads the bilayer. Residues 400 to 416 (ELRRFRQTPPQVTASDS) lie on the Cytoplasmic side of the membrane.

Belongs to the major facilitator superfamily. EntS (TC 2.A.1.38) family.

Its subcellular location is the cell inner membrane. Component of an export pathway for enterobactin. The chain is Enterobactin exporter EntS from Escherichia coli O45:K1 (strain S88 / ExPEC).